The following is a 318-amino-acid chain: 4-hydroxy-3-methylbut-2-enyl diphosphate reductase (318 aa).

Cys-12 is a [4Fe-4S] cluster binding site. Positions 41 and 74 each coordinate (2E)-4-hydroxy-3-methylbut-2-enyl diphosphate. The dimethylallyl diphosphate site is built by His-41 and His-74. Residues His-41 and His-74 each coordinate isopentenyl diphosphate. A [4Fe-4S] cluster-binding site is contributed by Cys-96. A (2E)-4-hydroxy-3-methylbut-2-enyl diphosphate-binding site is contributed by His-124. His-124 is a dimethylallyl diphosphate binding site. Residue His-124 participates in isopentenyl diphosphate binding. Glu-126 acts as the Proton donor in catalysis. Residue Thr-168 coordinates (2E)-4-hydroxy-3-methylbut-2-enyl diphosphate. Residue Cys-198 participates in [4Fe-4S] cluster binding. (2E)-4-hydroxy-3-methylbut-2-enyl diphosphate is bound by residues Ser-226, Ser-227, Asn-228, and Ser-270. Ser-226, Ser-227, Asn-228, and Ser-270 together coordinate dimethylallyl diphosphate. Ser-226, Ser-227, Asn-228, and Ser-270 together coordinate isopentenyl diphosphate.

Belongs to the IspH family. [4Fe-4S] cluster serves as cofactor.

The enzyme catalyses isopentenyl diphosphate + 2 oxidized [2Fe-2S]-[ferredoxin] + H2O = (2E)-4-hydroxy-3-methylbut-2-enyl diphosphate + 2 reduced [2Fe-2S]-[ferredoxin] + 2 H(+). The catalysed reaction is dimethylallyl diphosphate + 2 oxidized [2Fe-2S]-[ferredoxin] + H2O = (2E)-4-hydroxy-3-methylbut-2-enyl diphosphate + 2 reduced [2Fe-2S]-[ferredoxin] + 2 H(+). The protein operates within isoprenoid biosynthesis; dimethylallyl diphosphate biosynthesis; dimethylallyl diphosphate from (2E)-4-hydroxy-3-methylbutenyl diphosphate: step 1/1. Its pathway is isoprenoid biosynthesis; isopentenyl diphosphate biosynthesis via DXP pathway; isopentenyl diphosphate from 1-deoxy-D-xylulose 5-phosphate: step 6/6. Its function is as follows. Catalyzes the conversion of 1-hydroxy-2-methyl-2-(E)-butenyl 4-diphosphate (HMBPP) into a mixture of isopentenyl diphosphate (IPP) and dimethylallyl diphosphate (DMAPP). Acts in the terminal step of the DOXP/MEP pathway for isoprenoid precursor biosynthesis. The protein is 4-hydroxy-3-methylbut-2-enyl diphosphate reductase of Psychrobacter arcticus (strain DSM 17307 / VKM B-2377 / 273-4).